Reading from the N-terminus, the 658-residue chain is Integrator complex subunit 9 (658 aa).

Residues lysine 2 and phenylalanine 19 each contribute to the 1D-myo-inositol hexakisphosphate site. Lysine 58 is covalently cross-linked (Glycyl lysine isopeptide (Lys-Gly) (interchain with G-Cter in SUMO2)). The 1D-myo-inositol hexakisphosphate site is built by lysine 510 and arginine 511. The disordered stretch occupies residues 548–574 (DNKHLLQPPPRPAQPTSGKKRKRVSDD). Positions 566–570 (KKRKR) match the Nuclear localization signal motif.

Belongs to the metallo-beta-lactamase superfamily. RNA-metabolizing metallo-beta-lactamase-like family. INTS9 subfamily. Component of the Integrator complex, composed of core subunits INTS1, INTS2, INTS3, INTS4, INTS5, INTS6, INTS7, INTS8, INTS9/RC74, INTS10, INTS11/CPSF3L, INTS12, INTS13, INTS14 and INTS15. The core complex associates with protein phosphatase 2A subunits PPP2CA and PPP2R1A, to form the Integrator-PP2A (INTAC) complex. INTS9 is part of the RNA endonuclease subcomplex, composed of INTS4, INTS9, INTS11 and inositol hexakisphosphate (InsP6). Interacts with WDR73; interaction is required for the assembly of the RNA endonuclease subcomplex in the cytoplasm. Interacts with BRAT1; interaction is required for the assembly of the RNA endonuclease subcomplex. Interacts with ESRRB, ESRRB is not a core component of the Integrator complex and this association is a bridge for the interaction with the multiprotein complex Integrator; attracts the transcriptional machinery.

The protein resides in the nucleus. The protein localises to the cytoplasm. Functionally, component of the integrator complex, a multiprotein complex that terminates RNA polymerase II (Pol II) transcription in the promoter-proximal region of genes. The integrator complex provides a quality checkpoint during transcription elongation by driving premature transcription termination of transcripts that are unfavorably configured for transcriptional elongation: the complex terminates transcription by (1) catalyzing dephosphorylation of the C-terminal domain (CTD) of Pol II subunit POLR2A/RPB1 and SUPT5H/SPT5, (2) degrading the exiting nascent RNA transcript via endonuclease activity and (3) promoting the release of Pol II from bound DNA. The integrator complex is also involved in terminating the synthesis of non-coding Pol II transcripts, such as enhancer RNAs (eRNAs), small nuclear RNAs (snRNAs), telomerase RNAs and long non-coding RNAs (lncRNAs). Mediates recruitment of cytoplasmic dynein to the nuclear envelope, probably as component of the integrator complex. This Homo sapiens (Human) protein is Integrator complex subunit 9.